The primary structure comprises 1039 residues: Integrin alpha-4 (1039 aa).

The signal sequence occupies residues 1 to 40 (MFSTKSAWLRNGGADQGPRGIALREAVMLLLYFGVPTGPS). At 41 to 983 (YNLDPENALL…LHHQRPKRHF (943 aa)) the chain is on the extracellular side. FG-GAP repeat units follow at residues 42–107 (NLDP…PNQT), 117–184 (SGEP…TELS), 193–244 (DYTR…QYKA), 246–298 (VDRQ…ENEL), 299–358 (NIVY…GAVM), 362–419 (ERVL…GISS), and 423–485 (QRIE…HPES). Residues N86, N105, and N145 are each glycosylated (N-linked (GlcNAc...) asparagine). A disulfide bridge links C98 with C108. Intrachain disulfides connect C151–C172 and C190–C205. N236 carries N-linked (GlcNAc...) asparagine glycosylation. Ca(2+)-binding residues include D321, N323, D325, D329, D384, D386, D388, D392, D446, D448, N450, Y452, and D454. N487 carries an N-linked (GlcNAc...) asparagine glycan. 2 disulfides stabilise this stretch: C493/C502 and C508/C564. Residues N525 and N545 are each glycosylated (N-linked (GlcNAc...) asparagine). An SG1 motif is present at residues 613 to 623 (KKEKDVIRKMI). Residues C629 and C634 are joined by a disulfide bond. N633, N652, and N667 each carry an N-linked (GlcNAc...) asparagine glycan. An intrachain disulfide couples C705 to C718. N813 and N828 each carry an N-linked (GlcNAc...) asparagine glycan. 2 disulfide bridges follow: C859–C897 and C904–C909. The helical transmembrane segment at 984 to 1007 (TIIIITISLLLGLIVLLLISCVMW) threads the bilayer. Topologically, residues 1008–1039 (KAGFFKRQYKSILQEENRRDSWSYVNSKSNDD) are cytoplasmic. Positions 1010-1014 (GFFKR) match the GFFKR motif motif. S1028 bears the Phosphoserine mark.

The protein belongs to the integrin alpha chain family. In terms of assembly, heterodimer of an alpha and a beta subunit. The alpha subunit can sometimes be cleaved into two non-covalently associated fragments. Alpha-4 associates with either beta-1 or beta-7. Alpha-4 interacts with PXN, LPXN, and TGFB1I1/HIC5. Interacts with CSPG4 through CSPG4 chondroitin sulfate glycosaminoglycan. Interacts with JAML; integrin alpha-4/beta-1 may regulate leukocyte to endothelial cells adhesion by controlling JAML homodimerization. ITGA4:ITGB1 is found in a ternary complex with CX3CR1 and CX3CL1. Interacts with MDK. ITGA4:ITGB1 interacts with MDK; this interaction mediates MDK-induced osteoblast cells migration through PXN phosphorylation. Integrin ITGA4:ITGB1 interacts with SVEP1 (via Sushi domain 21); thereby inhibits Ca(2+) intracellular signaling and as a result represses vasocontraction. ITGA4:ITGB1 interacts with SELP. ITGA4:ITGB1 interacts with BCAM. Post-translationally, phosphorylation on Ser-1028 inhibits PXN binding. As to expression, expressed in the media layer of the arterial wall (at protein level). Weakly expression in the thymus, spleen and mesenteric lymph nodes.

The protein resides in the membrane. Its function is as follows. Integrins alpha-4/beta-1 (VLA-4 or LPAM-2) and alpha-4/beta-7 (LPAM-1) are receptors for fibronectin. They recognize one or more domains within the alternatively spliced CS-1 and CS-5 regions of fibronectin. They are also receptors for VCAM1. Integrin alpha-4/beta-1 recognizes the sequence Q-I-D-S in VCAM1. Integrin alpha-4/beta-7 is also a receptor for MADCAM1. It recognizes the sequence L-D-T in MADCAM1. On activated endothelial cells integrin VLA-4 triggers homotypic aggregation for most VLA-4-positive leukocyte cell lines. It may also participate in cytolytic T-cell interactions with target cells. ITGA4:ITGB1 binds to fractalkine (CX3CL1) and may act as its coreceptor in CX3CR1-dependent fractalkine signaling. ITGA4:ITGB1 binds to PLA2G2A via a site (site 2) which is distinct from the classical ligand-binding site (site 1) and this induces integrin conformational changes and enhanced ligand binding to site 1. Integrin ITGA4:ITGB1 represses PRKCA-mediated L-type voltage-gated channel Ca(2+) influx and ROCK-mediated calcium sensitivity in vascular smooth muscle cells via its interaction with SVEP1, thereby inhibiting vasocontraction. The polypeptide is Integrin alpha-4 (Itga4) (Mus musculus (Mouse)).